Reading from the N-terminus, the 73-residue chain is Protein SlyX homolog (73 aa).

The tract at residues 54-73 is disordered; that stretch reads LQQAESNAPAAPANERPPHY. Over residues 57 to 67 the composition is skewed to low complexity; it reads AESNAPAAPAN.

This sequence belongs to the SlyX family.

The chain is Protein SlyX homolog from Rhodopseudomonas palustris (strain BisA53).